The following is a 308-amino-acid chain: Taste receptor type 2 member 43 (308 aa).

Position 1 (Met1) is a topological domain, extracellular. Residues Ile2 to Cys22 form a helical membrane-spanning segment. The Cytoplasmic segment spans residues Ala23–Gln46. The chain crosses the membrane as a helical span at residues Ile47–Tyr67. Residues Ala68–Asn86 are Extracellular-facing. A helical membrane pass occupies residues Leu87–Leu107. The Cytoplasmic portion of the chain corresponds to Leu108 to Lys126. A helical membrane pass occupies residues Ser127–Val147. Over Asn148–Thr178 the chain is Extracellular. Asn161 and Asn176 each carry an N-linked (GlcNAc...) asparagine glycan. The helical transmembrane segment at Val179–Ile199 threads the bilayer. Topologically, residues Cys200–Gln229 are cytoplasmic. The chain crosses the membrane as a helical span at residues Thr230–Trp249. Residues Ser250–Ala258 are Extracellular-facing. The helical transmembrane segment at Val259–Ile279 threads the bilayer. Topologically, residues Trp280–Pro308 are cytoplasmic.

It belongs to the G-protein coupled receptor T2R family.

The protein localises to the membrane. It localises to the cell projection. Its subcellular location is the cilium membrane. Gustducin-coupled receptor immplicated in the perception of bitter compounds in the oral cavity and the gastrointestinal tract. Signals through PLCB2 and the calcium-regulated cation channel TRPM5. Activated by the sulfonyl amide sweeteners saccharin and acesulfame K. In airway epithelial cells, binding of bitter compounds increases the intracellular calcium ion concentration and stimulates ciliary beat frequency. May act as chemosensory receptors in airway epithelial cells to detect and eliminate potential noxious agents from the airways. The polypeptide is Taste receptor type 2 member 43 (TAS2R43) (Papio hamadryas (Hamadryas baboon)).